We begin with the raw amino-acid sequence, 628 residues long: FAD-linked oxidoreductase hmp9 (628 aa).

The N-terminal stretch at 1–29 (MFCIIRAQLLLLLHLLVLALLLVGTVCNA) is a signal peptide. The interval 34–53 (GHPSELEPLALKRGGSPRDD) is disordered. Asn-80 and Asn-133 each carry an N-linked (GlcNAc...) asparagine glycan. An FAD-binding PCMH-type domain is found at 152–337 (LGQLPVYAID…LKTKIKAYPN (186 aa)). Asn-356 carries an N-linked (GlcNAc...) asparagine glycan.

The protein belongs to the oxygen-dependent FAD-linked oxidoreductase family.

Its pathway is secondary metabolite biosynthesis. Functionally, FAD-linked oxidoreductase; part of the gene cluster that mediates the biosynthesis of hypothemycin, a resorcylic acid lactone (RAL) that irreversibly inhibits a subset of protein kinases with a conserved cysteine in the ATP binding site such as human ERK2. The first step is performed by both PKSs hmp3 and hmp8 and leads to the production of 7',8'-dehydrozearalenol (DHZ). The highly reducing PKS hpm8 synthesizes the reduced hexaketide (7S,11S,2E,8E)-7,11-dihydroxy-dodeca-2,8-dienoate, which is transferred downstream to the non-reducing PKS hpm3. Hpm3 then extends the reduced hexaketide to a nonaketide, after which regioselective cyclization and macrolactonization affords DHZ. The next step is the conversion of DHZ into aigialomycin C and is performed by the O-methyltransferase hmp5, the FAD-binding monooxygenase hmp7, and the cytochrome P450 monooxygenase hmp1. The wide substrate tolerance of the hmp5 and hmp7 implies that the reactions from DHZ to aigialomycin C can occur in any order. The steps from aigialomycin C to hypothemycin are less well established. The FAD-linked oxidoreductase hmp9 presumably catalyzes oxidation of the C-6' hydroxyl to a ketone. The timing of this oxidation is important, since the resulting enone functional group is a Michael acceptor that can react spontaneously with glutathione, an abundant metabolite in fungal cells. The glutathione S-transferase hmp2 catalyzes cis-trans isomerization of the 7',8' double bond with equilibrium favoring the trans isomer. The hpm6-encoded transporter might preferentially pump hypothemycin out of the cell relative to the trans isomer aigialomycin A. The cis-to-trans isomerization may be coupled with C-4' hydroxylation, since all known hypothemycin analogs containing the enone functional group also have hydroxyl groups at both C-4' and C-5'. The chain is FAD-linked oxidoreductase hmp9 from Hypomyces subiculosus (Nectria subiculosa).